Here is a 101-residue protein sequence, read N- to C-terminus: Small ribosomal subunit protein bS6 (101 aa).

This sequence belongs to the bacterial ribosomal protein bS6 family. In terms of assembly, part of the 30S ribosomal subunit. Forms a tight heterodimer with protein bS18.

In terms of biological role, located on the outer edge of the platform on the body of the 30S subunit. This is Small ribosomal subunit protein bS6 (rpsF) from Thermus thermophilus (strain ATCC BAA-163 / DSM 7039 / HB27).